Consider the following 976-residue polypeptide: Collagen alpha-1(I) chain (976 aa).

Phosphoserine is present on S1. The interval 1 to 976 (SAGGISVPGP…PGPPGPPGPP (976 aa)) is disordered. 4-hydroxyproline occurs at positions 20, 23, 26, 35, 38, 41, 55, 70, 76, 85, and 91. Positions 58-72 (NGDDGEAGKPGRPGE) are enriched in basic and acidic residues. A 5-hydroxylysine; alternate modification is found at K94. An O-linked (Gal...) hydroxylysine; alternate glycan is attached at K94. Position 100 is a phosphoserine (S100). 2 stretches are compositionally biased toward low complexity: residues 108–118 (DAGPAGPKGAP) and 132–150 (PGAS…TGAA). 4-hydroxyproline is present on residues P118, P132, P153, P162, P165, P192, P195, P207, P213, P222, P228, P231, and P246. Pro residues predominate over residues 152–164 (PPGPTGPAGPPGF). Low complexity predominate over residues 198–237 (AGAAGPAGNPGADGQPGAKGANGAPGIAGAPGFPGARGPS). K249 is modified (5-hydroxylysine). P255, P258, P266, P275, P290, P296, P304, and P310 each carry 4-hydroxyproline. A compositionally biased stretch (gly residues) spans 294–308 (GLPGPGERGGPGSRG). K319 carries the post-translational modification 5-hydroxylysine. 4-hydroxyproline is present on residues P328, P337, P343, P349, P358, P361, P370, P379, P385, P397, P406, P415, P418, P436, P453, P459, P465, P471, P477, P483, P495, P504, P517, P523, and P532. Positions 352-378 (KGLTGSPGSPGPDGKTGPPGPAGQDGR) are enriched in low complexity. The segment covering 387–406 (ARGQAGVMGFPGPKGAAGEP) has biased composition (low complexity). Over residues 465-474 (PGEAGKPGEQ) the composition is skewed to low complexity. The residue at position 544 (K544) is a 5-hydroxylysine. A 4-hydroxyproline mark is found at P550, P565, and P571. The span at 577-591 (SGPSGPAGPTGARGA) shows a compositional bias: low complexity. Phosphoserine is present on S580. 4-hydroxyproline occurs at positions 592, 598, 601, 610, 616, 634, 643, and 652. Residues 604 to 631 (AGFAGPPGADGQPGAKGEPGDAGAKGDA) show a composition bias toward low complexity. The residue at position 655 (K655) is a 5-hydroxylysine. Positions 660–676 (SAGPPGATGFPGAAGRV) are enriched in low complexity. 4-hydroxyproline occurs at positions 664 and 670. At P678 the chain carries 3-hydroxyproline. P679, P688, P691, P718, P726, P735, P753, P762, P765, P771, P786, P792, P798, P806, and P812 each carry 4-hydroxyproline. Residues 723–735 (KGSPGADGPAGAP) show a composition bias toward low complexity. The segment covering 785–795 (PPGPMGPPGLA) has biased composition (pro residues). K821 is modified (5-hydroxylysine). A compositionally biased stretch (pro residues) spans 829 to 844 (PGPPGAPGAPGAPGPV). 4-hydroxyproline occurs at positions 832, 835, and 838. Over residues 864–878 (AGPAGARGPAGPQGP) the composition is skewed to low complexity. Residues 879–893 (RGDKGETGEQGDRGI) are compositionally biased toward basic and acidic residues. K882 is subject to 5-hydroxylysine. K894 carries the post-translational modification 5-hydroxylysine; alternate. K894 carries O-linked (Gal...) hydroxylysine; alternate glycosylation. 4-hydroxyproline is present on residues P907, P910, P928, and P943. Over residues 910-943 (PGEQGPSGASGPAGPRGPPGSAGSPGKDGLNGLP) the composition is skewed to low complexity. P948 bears the 3-hydroxyproline mark. P949 carries the 4-hydroxyproline modification. Pro residues predominate over residues 961–976 (VGPPGPPGPPGPPGPP). P963 carries the 3-hydroxyproline modification. Position 964 is a 4-hydroxyproline (P964). A 3-hydroxyproline modification is found at P966. P967 is modified (4-hydroxyproline). P969 is modified (3-hydroxyproline). 3 positions are modified to 4-hydroxyproline: P970, P973, and P976.

It belongs to the fibrillar collagen family. Trimers of one alpha 2(I) and two alpha 1(I) chains. Post-translationally, contains mostly 4-hydroxyproline. Proline residues at the third position of the tripeptide repeating unit (G-X-Y) are hydroxylated in some or all of the chains. In terms of processing, contains 3-hydroxyproline at a few sites. This modification occurs on the first proline residue in the sequence motif Gly-Pro-Hyp, where Hyp is 4-hydroxyproline. Lysine residues at the third position of the tripeptide repeating unit (G-X-Y) are 5-hydroxylated in some or all of the chains. Post-translationally, O-glycosylated on hydroxylated lysine residues. The O-linked glycan consists of a Glc-Gal disaccharide. Expressed in bones.

The protein localises to the secreted. Its subcellular location is the extracellular space. The protein resides in the extracellular matrix. Its function is as follows. Type I collagen is a member of group I collagen (fibrillar forming collagen). This chain is Collagen alpha-1(I) chain, found in Acratocnus ye (Hispaniolan ground sloth).